Reading from the N-terminus, the 370-residue chain is Sphingolipid delta(4)-desaturase (370 aa).

3 consecutive transmembrane segments (helical) span residues 68–88, 92–112, and 128–148; these read VMGV…TPVF, FLTL…LAIH, and LFAV…FQPY. Positions 112 to 116 match the Histidine box-1 motif; it reads HELSH. The short motif at 149–153 is the Histidine box-2 element; sequence HQLHH. The next 3 helical transmembrane spans lie at 173 to 193, 197 to 217, and 220 to 240; these read FLSS…FYAL, FITQ…QLIF, and VMVT…TFLA. Positions 299–303 match the Histidine box-3 motif; sequence HNEHH.

The protein belongs to the fatty acid desaturase type 1 family. DEGS subfamily.

The protein resides in the membrane. It catalyses the reaction an N-acylsphinganine + 2 Fe(II)-[cytochrome b5] + O2 + 2 H(+) = an N-acylsphing-4-enine + 2 Fe(III)-[cytochrome b5] + 2 H2O. It participates in lipid metabolism; sphingolipid metabolism. Delta(4)-fatty-acid desaturase which introduces a double bond at the 4-position in the long-chain base (LCB) of ceramides. Required for the formation of the monounsaturated sphingoid base (E)-sphing-4-enine during glucosylceramide (GluCer) biosynthesis. The polypeptide is Sphingolipid delta(4)-desaturase (Candida albicans (strain SC5314 / ATCC MYA-2876) (Yeast)).